Reading from the N-terminus, the 314-residue chain is 2,3-dihydroxyphenylpropionate/2,3-dihydroxicinnamic acid 1,2-dioxygenase (314 aa).

The active-site Proton donor is the His-115. The active-site Proton acceptor is the His-179.

The protein belongs to the LigB/MhpB extradiol dioxygenase family. Homotetramer. It depends on Fe(2+) as a cofactor.

The catalysed reaction is 3-(2,3-dihydroxyphenyl)propanoate + O2 = (2Z,4E)-2-hydroxy-6-oxonona-2,4-dienedioate + H(+). It carries out the reaction (2E)-3-(2,3-dihydroxyphenyl)prop-2-enoate + O2 = (2Z,4E,7E)-2-hydroxy-6-oxonona-2,4,7-trienedioate + H(+). The protein operates within aromatic compound metabolism; 3-phenylpropanoate degradation. Its function is as follows. Catalyzes the non-heme iron(II)-dependent oxidative cleavage of 2,3-dihydroxyphenylpropionic acid and 2,3-dihydroxicinnamic acid into 2-hydroxy-6-ketononadienedioate and 2-hydroxy-6-ketononatrienedioate, respectively. This Klebsiella pneumoniae subsp. pneumoniae (strain ATCC 700721 / MGH 78578) protein is 2,3-dihydroxyphenylpropionate/2,3-dihydroxicinnamic acid 1,2-dioxygenase.